The primary structure comprises 86 residues: Translation initiation factor IF-1 2 (86 aa).

Positions 1-72 (MAKEELLEME…SKGRITFRHI (72 aa)) constitute an S1-like domain.

The protein belongs to the IF-1 family. In terms of assembly, component of the 30S ribosomal translation pre-initiation complex which assembles on the 30S ribosome in the order IF-2 and IF-3, IF-1 and N-formylmethionyl-tRNA(fMet); mRNA recruitment can occur at any time during PIC assembly.

The protein resides in the cytoplasm. In terms of biological role, one of the essential components for the initiation of protein synthesis. Stabilizes the binding of IF-2 and IF-3 on the 30S subunit to which N-formylmethionyl-tRNA(fMet) subsequently binds. Helps modulate mRNA selection, yielding the 30S pre-initiation complex (PIC). Upon addition of the 50S ribosomal subunit IF-1, IF-2 and IF-3 are released leaving the mature 70S translation initiation complex. The sequence is that of Translation initiation factor IF-1 2 from Polynucleobacter asymbioticus (strain DSM 18221 / CIP 109841 / QLW-P1DMWA-1) (Polynucleobacter necessarius subsp. asymbioticus).